The following is a 255-amino-acid chain: 5-oxoprolinase subunit A (255 aa).

Belongs to the LamB/PxpA family. Forms a complex composed of PxpA, PxpB and PxpC.

The enzyme catalyses 5-oxo-L-proline + ATP + 2 H2O = L-glutamate + ADP + phosphate + H(+). Its function is as follows. Catalyzes the cleavage of 5-oxoproline to form L-glutamate coupled to the hydrolysis of ATP to ADP and inorganic phosphate. The sequence is that of 5-oxoprolinase subunit A from Nitrobacter hamburgensis (strain DSM 10229 / NCIMB 13809 / X14).